A 432-amino-acid chain; its full sequence is Glutamyl-tRNA reductase (432 aa).

Substrate is bound by residues 55-58 (TCNR), Ser114, 119-121 (ETQ), and Gln125. Catalysis depends on Cys56, which acts as the Nucleophile. 194 to 199 (GAGEMI) is an NADP(+) binding site.

This sequence belongs to the glutamyl-tRNA reductase family. In terms of assembly, homodimer.

It carries out the reaction (S)-4-amino-5-oxopentanoate + tRNA(Glu) + NADP(+) = L-glutamyl-tRNA(Glu) + NADPH + H(+). It functions in the pathway porphyrin-containing compound metabolism; protoporphyrin-IX biosynthesis; 5-aminolevulinate from L-glutamyl-tRNA(Glu): step 1/2. Functionally, catalyzes the NADPH-dependent reduction of glutamyl-tRNA(Glu) to glutamate 1-semialdehyde (GSA). The chain is Glutamyl-tRNA reductase from Burkholderia orbicola (strain MC0-3).